The chain runs to 374 residues: Guanine nucleotide-binding protein subunit alpha-15 (374 aa).

Positions 41-374 (GELKLLLLGT…ARYLDEINLL (334 aa)) constitute a G-alpha domain. The G1 motif stretch occupies residues 44–57 (KLLLLGTGESGKST). Residues 49–56 (GTGESGKS), 183–189 (LRSRMPT), 208–212 (DVGGQ), 277–280 (NKTD), and A346 contribute to the GTP site. Residues S56 and T189 each contribute to the Mg(2+) site. The interval 181–189 (DVLRSRMPT) is G2 motif. The segment at 204–213 (LRIVDVGGQK) is G3 motif. Residues 273–280 (ILFLNKTD) are G4 motif. A G5 motif region spans residues 344–349 (TCATDT).

Belongs to the G-alpha family. G(q) subfamily. As to quaternary structure, g proteins are composed of 3 units; alpha, beta and gamma. The alpha chain contains the guanine nucleotide binding site.

Guanine nucleotide-binding proteins (G proteins) are involved as modulators or transducers in various transmembrane signaling systems. This chain is Guanine nucleotide-binding protein subunit alpha-15 (GNA15), found in Oryctolagus cuniculus (Rabbit).